The sequence spans 145 residues: D-aminoacyl-tRNA deacylase (145 aa).

Residues 137–138 carry the Gly-cisPro motif, important for rejection of L-amino acids motif; the sequence is GP.

The protein belongs to the DTD family. Homodimer.

Its subcellular location is the cytoplasm. It carries out the reaction glycyl-tRNA(Ala) + H2O = tRNA(Ala) + glycine + H(+). The enzyme catalyses a D-aminoacyl-tRNA + H2O = a tRNA + a D-alpha-amino acid + H(+). Its function is as follows. An aminoacyl-tRNA editing enzyme that deacylates mischarged D-aminoacyl-tRNAs. Also deacylates mischarged glycyl-tRNA(Ala), protecting cells against glycine mischarging by AlaRS. Acts via tRNA-based rather than protein-based catalysis; rejects L-amino acids rather than detecting D-amino acids in the active site. By recycling D-aminoacyl-tRNA to D-amino acids and free tRNA molecules, this enzyme counteracts the toxicity associated with the formation of D-aminoacyl-tRNA entities in vivo and helps enforce protein L-homochirality. This chain is D-aminoacyl-tRNA deacylase, found in Legionella pneumophila (strain Paris).